The sequence spans 141 residues: MMGLPLMAVPMLLDTGADPVYLARQWARMYYYGVRTMPPLAITTFILYVWTIIRRRSQHQAWYILAVAAVVTMGMIPFTWYVLAPTNNALFRLAEGPEAASGTTAGSLEEVTELLVRWNKLHIARSLFPLTGVVIALSDAM.

An N-terminal signal peptide occupies residues 1-19 (MMGLPLMAVPMLLDTGADP). The next 2 helical transmembrane spans lie at 33 to 53 (GVRT…WTII) and 64 to 84 (ILAV…YVLA).

It belongs to the anthrone oxygenase family.

Its subcellular location is the membrane. It functions in the pathway secondary metabolite biosynthesis. Anthrone oxygenase; part of the gene cluster that mediates the biosynthesis of pestheic acid, a diphenyl ether which is a biosynthetic precursor of the unique chloropupukeananes. The biosynthesis initiates from condensation of acetate and malonate units catalyzed by the non-reducing PKS ptaA. As the ptaA protein is TE/CLC domain-deficient, hydrolysis and Claisen cyclization of the polyketide could be catalyzed by ptaB containing a beta-lactamase domain. The ptaB protein might hydrolyze the thioester bond between the ACP of ptaA and the intermediate to release atrochrysone carboxylic acid, which is spontaneously dehydrated to form endocrocin anthrone. Endocrocin anthrone is then converted to endocrocin, catalyzed by the anthrone oxygenase ptaC. Spontaneous decarboxylation of endocrocin occurs to generate emodin. An O-methyltransferase (ptaH or ptaI) could methylate emodin to form physcion. PtaJ could then catalyze the oxidative cleavage of physcion, and rotation of the intermediate could then afford desmethylisosulochrin. PtaF, a putative NADH-dependent oxidoreductase, might also participate in the oxidative cleavage step. Desmethylisosulochrin is then transformed by another O-methyltransferase (ptaH or ptaI) to form isosulochrin. Chlorination of isosulochrin by ptaM in the cyclohexadienone B ring then produces chloroisosulochrin. PtaE is responsible for the oxidative coupling reactions of both benzophenones isosulochrin and chloroisosulochrin to RES-1214-1 and pestheic acid respectively, regardless of chlorination. This Pestalotiopsis fici (strain W106-1 / CGMCC3.15140) protein is Anthrone oxygenase ptaC.